Here is a 614-residue protein sequence, read N- to C-terminus: Deoxynucleoside triphosphate triphosphohydrolase SAMHD1 (614 aa).

The span at 1-13 shows a compositional bias: low complexity; that stretch reads MGSPAAGWGAAPA. A disordered region spans residues 1–33; that stretch reads MGSPAAGWGAAPAKRARREGSAESSCGSPADRD. The SAM domain occupies 37-102; sequence WDTERLCQHL…LACLNQLRQT (66 aa). Lysine 107 and valine 108 together coordinate GTP. Position 110 (asparagine 110) interacts with dGTP. Residues aspartate 128, glutamine 133, and arginine 136 each contribute to the GTP site. Glutamine 140, leucine 141, valine 147, and arginine 155 together coordinate dGTP. Glutamine 140 contacts dATP. Glutamine 140 is a binding site for dCTP. Glutamine 140 contributes to the dTTP binding site. Arginine 155 is a binding site for dATP. Arginine 155 is a dCTP binding site. Residue arginine 155 coordinates dTTP. Residues 155–307 form the HD domain; it reads RFEHSLGVGY…GIDVDKWDYF (153 aa). The Mn(2+) site is built by histidine 158, histidine 197, and aspartate 198. DATP-binding residues include histidine 201 and histidine 206. 2 residues coordinate dCTP: histidine 201 and histidine 206. Positions 201 and 206 each coordinate dTTP. Histidine 224 is an active-site residue. Aspartate 302 provides a ligand contact to Mn(2+). Lysine 303, tyrosine 306, aspartate 310, arginine 324, arginine 343, lysine 345, asparagine 349, arginine 357, tyrosine 365, glutamine 366, histidine 367, and lysine 368 together coordinate dGTP. Residues lysine 303, tyrosine 306, and aspartate 310 each contribute to the dATP site. Positions 303, 306, and 310 each coordinate dCTP. 3 residues coordinate dTTP: lysine 303, tyrosine 306, and aspartate 310. Arginine 357 serves as a coordination point for dATP. Position 357 (arginine 357) interacts with dCTP. A dATP-binding site is contributed by glutamine 366. Glutamine 366 contacts dCTP. Glutamine 366 contacts dTTP. GTP contacts are provided by arginine 442, lysine 446, and lysine 515. Residue lysine 515 participates in dGTP binding.

The protein belongs to the SAMHD1 family. In terms of assembly, homodimer; in absence of GTP and dNTP. Homotetramer; in GTP- and dNTP-bound form. Interacts with rbbp8/CtIP. Zn(2+) serves as cofactor.

The protein localises to the nucleus. Its subcellular location is the chromosome. It carries out the reaction a 2'-deoxyribonucleoside 5'-triphosphate + H2O = a 2'-deoxyribonucleoside + triphosphate + H(+). The catalysed reaction is dATP + H2O = 2'-deoxyadenosine + triphosphate + H(+). It catalyses the reaction dCTP + H2O = 2'-deoxycytidine + triphosphate + H(+). The enzyme catalyses dGTP + H2O = 2'-deoxyguanosine + triphosphate + H(+). It carries out the reaction dTTP + H2O = thymidine + triphosphate + H(+). With respect to regulation, allosterically activated and regulated via the combined actions of GTP and dNTPs (dATP, dGTP, dTTP and dCTP): Allosteric site 1 binds GTP, while allosteric site 2 binds dNTP. Allosteric activation promotes the formation of highly active homotetramers. Its function is as follows. Protein that acts both as a host restriction factor involved in defense response to virus and as a regulator of DNA end resection at stalled replication forks. Has deoxynucleoside triphosphate (dNTPase) activity, which is required to restrict infection by viruses: dNTPase activity reduces cellular dNTP levels to levels too low for retroviral reverse transcription to occur, blocking early-stage virus replication in dendritic and other myeloid cells. Functions during S phase at stalled DNA replication forks to promote the resection of gapped or reversed forks: acts by stimulating the exonuclease activity of MRE11, activating the ATR-CHK1 pathway and allowing the forks to restart replication. Its ability to promote degradation of nascent DNA at stalled replication forks is required to prevent induction of type I interferons, thereby preventing chronic inflammation. Ability to promote DNA end resection at stalled replication forks is independent of dNTPase activity. This chain is Deoxynucleoside triphosphate triphosphohydrolase SAMHD1, found in Gallus gallus (Chicken).